The following is a 187-amino-acid chain: Small monomeric GTPase RhbA (187 aa).

GDP is bound by residues Ser-17, Val-18, Gly-19, Lys-20, Ser-21, Ser-22, Val-33, and Glu-34. Ser-17 serves as a coordination point for GTP. Residues Gly-19, Lys-20, Ser-21, Ser-22, and Val-33 each contribute to the GTP site. Ser-21 contributes to the Mg(2+) binding site. GTP is bound by residues Tyr-36, Thr-39, Asn-120, Asp-123, and Ala-152. The Effector region signature appears at 36-44; the sequence is YYPTIENTF. A Mg(2+)-binding site is contributed by Thr-39. GDP is bound by residues Asn-120, Asp-123, and Ala-152. A lipid anchor (S-farnesyl cysteine) is attached at Cys-184.

It belongs to the small GTPase superfamily. Rheb family. Farnesylation is important for efficiently activating mTORC1-mediated signaling.

Its subcellular location is the cell membrane. The enzyme catalyses GTP + H2O = GDP + phosphate + H(+). Its activity is regulated as follows. Alternates between an inactive form bound to GDP and an active form bound to GTP. Functionally, small GTPase that acts as an allosteric activator of the canonical TOR pathway, an evolutionarily conserved central nutrient sensor that stimulates anabolic reactions and macromolecule biosynthesis to promote cellular biomass generation and growth. Plays a role in virulence. The protein is Small monomeric GTPase RhbA of Aspergillus fumigatus (strain ATCC MYA-4609 / CBS 101355 / FGSC A1100 / Af293) (Neosartorya fumigata).